Consider the following 478-residue polypeptide: Isoeugenol monooxygenase (478 aa).

Fe cation contacts are provided by H167, H218, H282, and H471.

This sequence belongs to the carotenoid oxygenase family. Requires Fe(2+) as cofactor.

The enzyme catalyses (E)-isoeugenol + O2 = vanillin + acetaldehyde. With respect to regulation, inhibited by Co(2+), Ni(2+) and Zn(2+), which may inhibit enzyme activity by replacing iron in the catalytic residues. Inhibited by incubation with high concentrations of the iron chelators 1,10-phenanthroline and Tiron. However, iron is not completely removed by the chelators, suggesting that iron is tightly bound to the enzyme. Functionally, involved in isoeugenol degradation. Catalyzes the oxidative cleavage of the side chain double-bond of isoeugenol to form vanillin and acetaldehyde. This Pseudomonas nitroreducens protein is Isoeugenol monooxygenase.